A 578-amino-acid polypeptide reads, in one-letter code: Vitelline membrane-like protein (578 aa).

The signal sequence occupies residues 1 to 21 (MCGRRLLFLAAFGCLLANAFS). The tract at residues 72 to 452 (QGYSAPAAPV…AAPSYSAPAS (381 aa)) is 45 X 8 AA approximate tandem repeats of [PS]-[AS]-Y-S-A-P-A-[AS]. Disordered regions lie at residues 133–442 (ASSS…YSAP) and 487–514 (SGSP…ASKS). The region spanning 549 to 578 (SLPSPPCPKNYVFSCSSVFTPAPCSQGYGY) is the VM domain.

As to quaternary structure, interacts with Vm26Aa and Vm26Ab; forms part of a disulfide-linked network within the vitelline membrane of stage 10 egg chambers. Post-translationally, becomes part of a disulfide-linked network including other vitelline membrane proteins, including Vm26Aa and Vm26Ab, during vitelline membrane biogenesis and maturation. In terms of processing, sulfated by pip; probably involved in embryo dorsal-ventral axis determination. Sulfation by pip may occur on covalently bound glycosaminoglycans. Secreted into the perivitelline space and becomes stably incorporated into the vitelline membrane (at protein level). Expressed throughout the follicle cell layer of stage 10 egg chambers.

The protein resides in the secreted. It localises to the extracellular space. The protein localises to the extracellular matrix. Its function is as follows. Major early eggshell protein secreted by folicle cells into the perivitelline space and incorporated into the vitelline membrane. Localized sulfation by pip may be involved in embryo dorsal-ventral axis determination. In Drosophila melanogaster (Fruit fly), this protein is Vitelline membrane-like protein.